Here is a 280-residue protein sequence, read N- to C-terminus: Energy-coupling factor transporter ATP-binding protein EcfA1 (280 aa).

The ABC transporter domain occupies 6–241; that stretch reads LRTENISFQY…SHMLQEIGLD (236 aa). 40–47 lines the ATP pocket; that stretch reads GQNGSGKS.

The protein belongs to the ABC transporter superfamily. Energy-coupling factor EcfA family. As to quaternary structure, forms a stable energy-coupling factor (ECF) transporter complex composed of 2 membrane-embedded substrate-binding proteins (S component), 2 ATP-binding proteins (A component) and 2 transmembrane proteins (T component).

The protein localises to the cell membrane. ATP-binding (A) component of a common energy-coupling factor (ECF) ABC-transporter complex. Unlike classic ABC transporters this ECF transporter provides the energy necessary to transport a number of different substrates. The sequence is that of Energy-coupling factor transporter ATP-binding protein EcfA1 from Bacillus cereus (strain ZK / E33L).